We begin with the raw amino-acid sequence, 359 residues long: Phospho-N-acetylmuramoyl-pentapeptide-transferase (359 aa).

Helical transmembrane passes span 3–23 (QILI…PVLI), 55–75 (VAIL…GLAF), 80–100 (IGAS…VGFI), 117–137 (TAKT…VLQF), 156–176 (IATV…IVSA), 187–207 (LDGL…LITF), 231–251 (LALI…WNAA), 255–275 (IFMG…LSVT), 280–300 (ILAV…VLQI), and 334–354 (FWLL…GEWL).

The protein belongs to the glycosyltransferase 4 family. MraY subfamily. Mg(2+) is required as a cofactor.

Its subcellular location is the cell membrane. It carries out the reaction UDP-N-acetyl-alpha-D-muramoyl-L-alanyl-gamma-D-glutamyl-meso-2,6-diaminopimeloyl-D-alanyl-D-alanine + di-trans,octa-cis-undecaprenyl phosphate = di-trans,octa-cis-undecaprenyl diphospho-N-acetyl-alpha-D-muramoyl-L-alanyl-D-glutamyl-meso-2,6-diaminopimeloyl-D-alanyl-D-alanine + UMP. Its pathway is cell wall biogenesis; peptidoglycan biosynthesis. In terms of biological role, catalyzes the initial step of the lipid cycle reactions in the biosynthesis of the cell wall peptidoglycan: transfers peptidoglycan precursor phospho-MurNAc-pentapeptide from UDP-MurNAc-pentapeptide onto the lipid carrier undecaprenyl phosphate, yielding undecaprenyl-pyrophosphoryl-MurNAc-pentapeptide, known as lipid I. The sequence is that of Phospho-N-acetylmuramoyl-pentapeptide-transferase from Mycobacterium tuberculosis (strain ATCC 25177 / H37Ra).